A 561-amino-acid chain; its full sequence is Potassium-transporting ATPase potassium-binding subunit (561 aa).

Transmembrane regions (helical) follow at residues 4–24 (IIMQDVFFIVLLLVLAIPLGI), 65–85 (AGSVLAFSAIGFVFVMAVLML), 134–154 (GLTVQNFVSAATGIAVLFAVI), 177–197 (LYILLPLSLVLAILLVSQGVV), 253–273 (FTNLIEMLAILLIPVALVVMF), 285–305 (AIMTAMMIVFVVGIVAITISE), 380–400 (GLYGMIGFIILTVFIAGLLVG), 417–437 (MVCLLILVPPLLTLFGTAFAV), 484–504 (MVGALMMLFARFIPLIAALYL), and 528–548 (FIGLLIGVVVLVGALSFLPAL).

It belongs to the KdpA family. In terms of assembly, the system is composed of three essential subunits: KdpA, KdpB and KdpC.

It is found in the cell membrane. Part of the high-affinity ATP-driven potassium transport (or Kdp) system, which catalyzes the hydrolysis of ATP coupled with the electrogenic transport of potassium into the cytoplasm. This subunit binds the extracellular potassium ions and delivers the ions to the membrane domain of KdpB through an intramembrane tunnel. This is Potassium-transporting ATPase potassium-binding subunit from Listeria welshimeri serovar 6b (strain ATCC 35897 / DSM 20650 / CCUG 15529 / CIP 8149 / NCTC 11857 / SLCC 5334 / V8).